A 351-amino-acid chain; its full sequence is Cyanuric acid amidohydrolase (351 aa).

Positions 1–96 (MPSLRAHVFR…HWTVFARETV (96 aa)) are RU A. Substrate is bound by residues R53 and 77-78 (SG). The interval 103 to 240 (ALAIGVSRTP…HEIIVLGMSA (138 aa)) is RU B. The active site involves K153. Residues R185 and 223–224 (SS) contribute to the substrate site. Residue S223 is the Nucleophile of the active site. Positions 246–351 (LSIDHAVMRD…PVAIIVEKEQ (106 aa)) are RU C. E283 serves as a coordination point for Mg(2+). Substrate-binding positions include R310 and 329 to 330 (SG). Mg(2+)-binding residues include A332, Q335, G336, P337, and G340.

This sequence belongs to the cyclic amide hydrolase (CyAH) family. Homotetramer.

It catalyses the reaction cyanurate + H2O = 1-carboxybiuret + H(+). Its pathway is xenobiotic degradation; atrazine degradation; biuret from cyanurate: step 1/1. Its activity is regulated as follows. Inhibited by barbituric acid. Functionally, responsible for the hydrolysis of cyanuric acid, an intermediate formed during catabolism of s-triazine based compounds in herbicides such as atrazine and polymers such as melamine. Catalyzes the hydrolytic opening of the s-triazine ring of cyanuric acid (2,4,6-trihydroxy-s-triazine) to yield carbon dioxide and carboxybiuret, which spontaneously decarboxylates to biuret. The sequence is that of Cyanuric acid amidohydrolase from Rhizobium johnstonii (strain DSM 114642 / LMG 32736 / 3841) (Rhizobium leguminosarum bv. viciae).